Reading from the N-terminus, the 361-residue chain is Alanine racemase (361 aa).

Lysine 34 functions as the Proton acceptor; specific for D-alanine in the catalytic mechanism. Lysine 34 carries the N6-(pyridoxal phosphate)lysine modification. Position 129 (arginine 129) interacts with substrate. The active-site Proton acceptor; specific for L-alanine is tyrosine 256. Methionine 304 lines the substrate pocket.

This sequence belongs to the alanine racemase family. Homodimer. Requires pyridoxal 5'-phosphate as cofactor.

The enzyme catalyses L-alanine = D-alanine. Its pathway is amino-acid biosynthesis; D-alanine biosynthesis; D-alanine from L-alanine: step 1/1. Catalyzes the interconversion of L-alanine and D-alanine. May also act on other amino acids. This Corynebacterium glutamicum (strain ATCC 13032 / DSM 20300 / JCM 1318 / BCRC 11384 / CCUG 27702 / LMG 3730 / NBRC 12168 / NCIMB 10025 / NRRL B-2784 / 534) protein is Alanine racemase (alr).